Consider the following 658-residue polypeptide: Glycogen debranching enzyme (658 aa).

Catalysis depends on D336, which acts as the Nucleophile. The active-site Proton donor is the E371. The disordered stretch occupies residues 459 to 484 (EANGEENRDGTNSNYSDNHGKEGLGG).

The protein belongs to the glycosyl hydrolase 13 family.

It catalyses the reaction Hydrolysis of (1-&gt;6)-alpha-D-glucosidic linkages to branches with degrees of polymerization of three or four glucose residues in limit dextrin.. It functions in the pathway glycan degradation; glycogen degradation. Its function is as follows. Removes maltotriose and maltotetraose chains that are attached by 1,6-alpha-linkage to the limit dextrin main chain, generating a debranched limit dextrin. This Salmonella paratyphi B (strain ATCC BAA-1250 / SPB7) protein is Glycogen debranching enzyme.